Here is an 826-residue protein sequence, read N- to C-terminus: Breast cancer anti-estrogen resistance protein 3 homolog (826 aa).

The residue at position 2 (Ala2) is an N-acetylalanine. Ser32, Ser78, Ser83, and Ser182 each carry phosphoserine. The tract at residues 46 to 81 (SIHGTLPRKKKGPPPIRSCDNFSHVGTLPHSRSPRH) is disordered. The 100-residue stretch at 154–253 (WYHGRIPRQV…QSGAIIFQPV (100 aa)) folds into the SH2 domain. The interval 268-287 (ASSPDRAHEGSLTEGRPDAA) is disordered. Residue Ser291 is modified to Phosphoserine. The interval 294 to 321 (VGGTQAREQGLPRGNLLRNKEKSGSQPA) is disordered. Position 335 is an N6-methyllysine (Lys335). The tract at residues 348–406 (KLTPQSPSVGTSPCPNSPVFRTGSEPTLSPAVVRRVSSDARPGEALRGSDSQLCPKPPP) is disordered. The span at 350–361 (TPQSPSVGTSPC) shows a compositional bias: polar residues. Phosphoserine occurs at positions 359, 364, 376, and 472. The interval 480–501 (DDDDRTRPWKPPPAPGDTVGED) is disordered. A Ras-GEF domain is found at 549-819 (DPKVIAQHLL…TALSRKLEPP (271 aa)). The mediates the interaction with BCAR1/p130CAS stretch occupies residues 745-749 (LATAR).

Part of a complex comprised of PTPRA, BCAR1, BCAR3 (via SH2 domain) and SRC; the formation of the complex is dependent on integrin mediated-tyrosine phosphorylation of PTPRA. Within the complex, interacts (via SH2 domain) with PTPRA (when phosphorylated on 'Tyr-797'). Interacts (via Ras-GEF domain) with BCAR1. Interacts (via Ras-GEF domain) with NEDD9. Interacts with PTK2/FAK1. Interacts with PTPN1. Interacts (via SH2 domain) with EGFR (when tyrosine-phosphorylated). In terms of processing, phosphorylated on tyrosine residues.

Its subcellular location is the cytoplasm. The protein localises to the cell junction. The protein resides in the focal adhesion. In terms of biological role, acts as an adapter protein downstream of several growth factor receptors to promote cell proliferation, migration, and redistribution of actin fibers. Specifically involved in INS/insulin signaling pathway by mediating MAPK1/ERK2-MAPK3/ERK1 activation and DNA synthesis. Promotes insulin-mediated membrane ruffling. In response to vasoconstrictor peptide EDN1, involved in the activation of RAP1 downstream of PTK2B via interaction with phosphorylated BCAR1. Inhibits cell migration and invasion via regulation of TGFB-mediated matrix digestion, actin filament rearrangement, and inhibition of invadopodia activity. May inhibit TGFB-SMAD signaling, via facilitating BCAR1 and SMAD2 and/or SMAD3 interaction. Regulates EGF-induced DNA synthesis. Required for the maintenance of ocular lens morphology and structural integrity, potentially via regulation of focal adhesion complex signaling. Acts upstream of PTPRA to regulate the localization of BCAR1 and PTPRA to focal adhesions, via regulation of SRC-mediated phosphorylation of PTPRA. Positively regulates integrin-induced tyrosine phosphorylation of BCAR1. Acts as a guanine nucleotide exchange factor (GEF) for small GTPases RALA, RAP1A and RRAS. However, in a contrasting study, lacks GEF activity towards RAP1. The protein is Breast cancer anti-estrogen resistance protein 3 homolog (BCAR3) of Bos taurus (Bovine).